The chain runs to 421 residues: Ubiquitin-like modifier-activating enzyme 5 (421 aa).

Glycine 89, aspartate 110, lysine 133, asparagine 156, and asparagine 191 together coordinate ATP. Zn(2+) contacts are provided by cysteine 233 and cysteine 236. Cysteine 257 (glycyl thioester intermediate) is an active-site residue. Residues cysteine 310 and cysteine 315 each coordinate Zn(2+).

This sequence belongs to the ubiquitin-activating E1 family. UBA5 subfamily.

E1-like enzyme which activates UFM1. The chain is Ubiquitin-like modifier-activating enzyme 5 from Oryza sativa subsp. japonica (Rice).